Reading from the N-terminus, the 304-residue chain is Non-specific ribonucleoside hydrolase RihC (304 aa).

Histidine 233 is a catalytic residue.

It belongs to the IUNH family. RihC subfamily.

Hydrolyzes both purine and pyrimidine ribonucleosides with a broad-substrate specificity. In Klebsiella pneumoniae (strain 342), this protein is Non-specific ribonucleoside hydrolase RihC.